The primary structure comprises 545 residues: Chaperonin GroEL (545 aa).

ATP is bound by residues 30–33, K51, 87–91, G415, 483–485, and D499; these read TLGP, DGTTT, and NAA.

Belongs to the chaperonin (HSP60) family. As to quaternary structure, forms a cylinder of 14 subunits composed of two heptameric rings stacked back-to-back. Interacts with the co-chaperonin GroES.

It localises to the cytoplasm. It carries out the reaction ATP + H2O + a folded polypeptide = ADP + phosphate + an unfolded polypeptide.. In terms of biological role, together with its co-chaperonin GroES, plays an essential role in assisting protein folding. The GroEL-GroES system forms a nano-cage that allows encapsulation of the non-native substrate proteins and provides a physical environment optimized to promote and accelerate protein folding. The sequence is that of Chaperonin GroEL from Aquifex aeolicus (strain VF5).